The sequence spans 147 residues: Acidic phospholipase A2 S7-48J (147 aa).

Residues 1–19 form the signal peptide; that stretch reads MYPAHLLVLLAVCVSLLGA. Residues 20-27 constitute a propeptide that is removed on maturation; sequence SDIPPQPL. 7 cysteine pairs are disulfide-bonded: Cys-38–Cys-99, Cys-54–Cys-146, Cys-56–Cys-72, Cys-71–Cys-127, Cys-78–Cys-120, Cys-88–Cys-113, and Cys-106–Cys-118. Positions 55, 57, and 59 each coordinate Ca(2+). The active site involves His-75. Asp-76 contacts Ca(2+). The active site involves Asp-121.

This sequence belongs to the phospholipase A2 family. Group I subfamily. D49 sub-subfamily. Requires Ca(2+) as cofactor. As to expression, expressed by the venom gland.

The protein localises to the secreted. It carries out the reaction a 1,2-diacyl-sn-glycero-3-phosphocholine + H2O = a 1-acyl-sn-glycero-3-phosphocholine + a fatty acid + H(+). Its function is as follows. Snake venom phospholipase A2 (PLA2) that inhibits collagen-induced platelet aggregation. PLA2 catalyzes the calcium-dependent hydrolysis of the 2-acyl groups in 3-sn-phosphoglycerides. In Austrelaps superbus (Lowland copperhead snake), this protein is Acidic phospholipase A2 S7-48J.